Here is a 503-residue protein sequence, read N- to C-terminus: Transforming protein rel polyprotein (503 aa).

The 290-residue stretch at 16-305 (PYIEIFEQPR…GNKAKRQRST (290 aa)) folds into the RHD domain. At S275 the chain carries Phosphoserine; by host PKA. Disordered regions lie at residues 286–306 (RYLPDEEDPSGNKAKRQRSTL) and 318–342 (AVTERPKAAPIPTVNPEGKLKKEPN). The Nuclear localization signal signature appears at 298-303 (KAKRQR).

Its subcellular location is the host cytoplasm. This transforming protein appears to have a protein-kinase activity. In Galliformes, this protein is Transforming protein rel polyprotein (V-REL).